Consider the following 60-residue polypeptide: Large ribosomal subunit protein uL30 (60 aa).

This sequence belongs to the universal ribosomal protein uL30 family. In terms of assembly, part of the 50S ribosomal subunit.

This chain is Large ribosomal subunit protein uL30, found in Streptomyces coelicolor (strain ATCC BAA-471 / A3(2) / M145).